The chain runs to 391 residues: ATP phosphoribosyltransferase regulatory subunit (391 aa).

Belongs to the class-II aminoacyl-tRNA synthetase family. HisZ subfamily. In terms of assembly, heteromultimer composed of HisG and HisZ subunits.

The protein resides in the cytoplasm. It functions in the pathway amino-acid biosynthesis; L-histidine biosynthesis; L-histidine from 5-phospho-alpha-D-ribose 1-diphosphate: step 1/9. Functionally, required for the first step of histidine biosynthesis. May allow the feedback regulation of ATP phosphoribosyltransferase activity by histidine. The sequence is that of ATP phosphoribosyltransferase regulatory subunit from Nitrosomonas europaea (strain ATCC 19718 / CIP 103999 / KCTC 2705 / NBRC 14298).